The chain runs to 113 residues: Protein translation factor SUI1 homolog 2 (113 aa).

Ser2 carries the post-translational modification N-acetylserine.

It belongs to the SUI1 family.

Its function is as follows. Probably involved in translation. This Arabidopsis thaliana (Mouse-ear cress) protein is Protein translation factor SUI1 homolog 2.